The sequence spans 296 residues: Ribosomal RNA small subunit methyltransferase A (296 aa).

Basic and acidic residues predominate over residues 1–11; the sequence is MERSHVGRDCG. Residues 1-24 are disordered; the sequence is MERSHVGRDCGSRSSPRAFSVPTS. Residues 12-24 are compositionally biased toward polar residues; it reads SRSSPRAFSVPTS. Positions 43, 45, 70, 91, 113, and 135 each coordinate S-adenosyl-L-methionine.

The protein belongs to the class I-like SAM-binding methyltransferase superfamily. rRNA adenine N(6)-methyltransferase family. RsmA subfamily.

It is found in the cytoplasm. It carries out the reaction adenosine(1518)/adenosine(1519) in 16S rRNA + 4 S-adenosyl-L-methionine = N(6)-dimethyladenosine(1518)/N(6)-dimethyladenosine(1519) in 16S rRNA + 4 S-adenosyl-L-homocysteine + 4 H(+). In terms of biological role, specifically dimethylates two adjacent adenosines (A1518 and A1519) in the loop of a conserved hairpin near the 3'-end of 16S rRNA in the 30S particle. May play a critical role in biogenesis of 30S subunits. The sequence is that of Ribosomal RNA small subunit methyltransferase A from Salinibacter ruber (strain DSM 13855 / M31).